The sequence spans 777 residues: Zinc finger FYVE domain-containing protein 1 (777 aa).

The interval 416–777 is required for localization in the lipid droplets; that stretch reads MAHSSFFPDE…FNCNKKPGDL (362 aa). FYVE-type zinc fingers lie at residues 598-659 and 715-775; these read NSQI…EARN and DHEI…KKPG. Residues cysteine 604, cysteine 607, cysteine 620, cysteine 623, cysteine 628, cysteine 631, cysteine 651, cysteine 654, cysteine 721, cysteine 724, cysteine 737, cysteine 740, cysteine 745, cysteine 748, cysteine 767, and cysteine 770 each coordinate Zn(2+).

Interacts with RAB18 (in GTP-bound form). Interacts with BSCL2 in a RAB18-dependent manner. Interacts with ZW10. In terms of assembly, (Microbial infection) Interacts with SARS coronavirus-2/SARS-CoV-2 non-structural protein 6 (nsp6); the interaction is independent of PtdIns3P-binding and leads to endoplasmic reticulum (ER) and double membrane vesicles (DMVs) binding to lipid droplets. In terms of tissue distribution, highly expressed in heart. Also detected in the testis. As to expression, expressed in all tissues examined, including, brain, placenta, lung, liver, skeletal muscle, pancreas and kidney. Highly expressed in heart.

It localises to the golgi apparatus. The protein localises to the golgi stack. The protein resides in the endoplasmic reticulum. It is found in the lipid droplet. Its subcellular location is the preautophagosomal structure. It localises to the mitochondrion. Its function is as follows. Plays a role in the formation of lipid droplets (LDs) which are storage organelles at the center of lipid and energy homeostasis. Regulates the morphology, size and distribution of LDs. Mediates the formation of endoplasmic reticulum-lipid droplets (ER-LD) contacts by forming a complex with RAB18 and ZW10. Binds to phosphatidylinositol 3-phosphate (PtdIns3P) through FYVE-type zinc finger. In terms of biological role, (Microbial infection) Upon SARS coronavirus-2/SARS-CoV-2 infection, mediates through binding with non-structural protein 6 (nsp6) the replication organelle-lipid droplet association required to sustain viral replication. The chain is Zinc finger FYVE domain-containing protein 1 (ZFYVE1) from Homo sapiens (Human).